Consider the following 449-residue polypeptide: Anthocyanidin 3-O-glucosyltransferase 1 (449 aa).

H3 serves as the catalytic Proton acceptor. H3 serves as a coordination point for an anthocyanidin. The Charge relay role is filled by D103. UDP-alpha-D-glucose-binding residues include T125, A325, Q327, H342, W345, N346, S347, and E350. A365 is an an anthocyanidin binding site. E366 and Q367 together coordinate UDP-alpha-D-glucose.

This sequence belongs to the UDP-glycosyltransferase family. Expressed in cotyledons and roots, but not in leaves.

It carries out the reaction an anthocyanidin + UDP-alpha-D-glucose + H(+) = an anthocyanidin 3-O-beta-D-glucoside + UDP. It functions in the pathway pigment biosynthesis; anthocyanin biosynthesis. In the presence of other necessary color factors, this glycosylation reaction allows the accumulation of anthocyanin pigments. The chain is Anthocyanidin 3-O-glucosyltransferase 1 (GT1) from Manihot esculenta (Cassava).